Here is a 37-residue protein sequence, read N- to C-terminus: Large ribosomal subunit protein bL36 (37 aa).

It belongs to the bacterial ribosomal protein bL36 family.

The sequence is that of Large ribosomal subunit protein bL36 from Trichodesmium erythraeum (strain IMS101).